We begin with the raw amino-acid sequence, 185 residues long: dTDP-4-dehydrorhamnose 3,5-epimerase (185 aa).

Substrate-binding positions include arginine 26, glutamate 31, 49–51 (QDN), and arginine 61. Catalysis depends on histidine 64, which acts as the Proton acceptor. Substrate is bound by residues lysine 73 and histidine 120. Tyrosine 133 acts as the Proton donor in catalysis. 2 residues coordinate substrate: aspartate 144 and lysine 171.

Belongs to the dTDP-4-dehydrorhamnose 3,5-epimerase family. In terms of assembly, homodimer.

It carries out the reaction dTDP-4-dehydro-6-deoxy-alpha-D-glucose = dTDP-4-dehydro-beta-L-rhamnose. Its pathway is carbohydrate biosynthesis; dTDP-L-rhamnose biosynthesis. Catalyzes the epimerization of the C3' and C5'positions of dTDP-6-deoxy-D-xylo-4-hexulose, forming dTDP-6-deoxy-L-lyxo-4-hexulose. This is dTDP-4-dehydrorhamnose 3,5-epimerase (rmlC) from Methanothermobacter thermautotrophicus (strain ATCC 29096 / DSM 1053 / JCM 10044 / NBRC 100330 / Delta H) (Methanobacterium thermoautotrophicum).